A 222-amino-acid chain; its full sequence is MYSNITKAWHEDPVKEITSKLSKGYFNANKNNKFENERSSEISDKILDKNPKYNFLSTESDLVSLTENNLHLLSNNSAHISDLNSSEFGNYAPVDFATKIKPHNISNKHLPLVSSKDSECDFSMNHIKHCNICYGRLKELINNKVSKKMDEIILDNKIKQIQSFVPSLDNLSKSNLTTDQSMNNQNRNTISNNDLWKTALIIIIGIVIILLLIIVMIKTVCK.

Residues Asn4, Asn75, Asn84, Asn104, Asn170, and Asn175 are each glycosylated (N-linked (GlcNAc...) asparagine; by host). Residues 200-220 traverse the membrane as a helical segment; the sequence is LIIIIGIVIILLLIIVMIKTV.

It localises to the membrane. This is an uncharacterized protein from Acanthamoeba polyphaga (Amoeba).